A 908-amino-acid polypeptide reads, in one-letter code: Magnesium-transporting ATPase, P-type 1 (908 aa).

The span at 1-20 (MTDMNIENRKLNRPASENDK) shows a compositional bias: basic and acidic residues. The interval 1–21 (MTDMNIENRKLNRPASENDKQ) is disordered. Topologically, residues 1–80 (MTDMNIENRK…QVPPALIQLL (80 aa)) are cytoplasmic. The chain crosses the membrane as a helical span at residues 81-101 (QAFNNPFIYVLMALAGVSFIT). The Extracellular portion of the chain corresponds to 102 to 113 (DYWLPLRRGEET). A helical transmembrane segment spans residues 114 to 134 (DLTGVLIILTMVSLSGLLRFW). Topologically, residues 135 to 293 (QEFRTNRAAQ…QTAFDRGVNS (159 aa)) are cytoplasmic. Residues 294–314 (VSWLLIRFMLIMVPVVLLING) form a helical membrane-spanning segment. Residues 315 to 323 (FSKGDWVEA) lie on the Extracellular side of the membrane. Residues 324–341 (SLFALAVAVGLTPEMLPM) form a helical membrane-spanning segment. Glutamate 337 provides a ligand contact to Mg(2+). At 342 to 704 (IVSSNLAKGA…IKGRETFGNI (363 aa)) the chain is on the cytoplasmic side. Catalysis depends on aspartate 379, which acts as the 4-aspartylphosphate intermediate. Positions 650, 654, and 718 each coordinate Mg(2+). The helical transmembrane segment at 705 to 724 (IKYLNMTASSNFGNVFSVLV) threads the bilayer. Topologically, residues 725–733 (ASAFIPFLP) are extracellular. The chain crosses the membrane as a helical span at residues 734–753 (MLAIHLLIQNLMYDISQLSL). Mg(2+) contacts are provided by asparagine 743 and aspartate 747. Topologically, residues 754 to 775 (PWDKMDKEFLRKPRKWDAKNIG) are cytoplasmic. The chain crosses the membrane as a helical span at residues 776–799 (RFMLWIGPTSSIFDITTFALMWYV). Over 800–808 (FAANNVEAQ) the chain is Extracellular. A helical transmembrane segment spans residues 809 to 827 (ALFQSGWFIEGLLSQTLVV). At 828 to 840 (HMLRTQKIPFIQS) the chain is on the cytoplasmic side. A helical transmembrane segment spans residues 841–860 (RATLPVLLTTGLIMAIGIYI). At 861–875 (PFSPLGAMVGLEPLP) the chain is on the extracellular side. The chain crosses the membrane as a helical span at residues 876–895 (LSYFPWLVATLLSYCLVAQG). The Cytoplasmic segment spans residues 896–908 (MKRFYIKRFGQWF).

This sequence belongs to the cation transport ATPase (P-type) (TC 3.A.3) family. Type IIIB subfamily.

It is found in the cell inner membrane. It carries out the reaction Mg(2+)(out) + ATP + H2O = Mg(2+)(in) + ADP + phosphate + H(+). Functionally, mediates magnesium influx to the cytosol. The polypeptide is Magnesium-transporting ATPase, P-type 1 (mgtB) (Salmonella typhimurium (strain LT2 / SGSC1412 / ATCC 700720)).